The chain runs to 539 residues: Phosphoenolpyruvate carboxykinase (ATP) (539 aa).

Substrate-binding residues include Arg64, Tyr206, and Lys212. Residues Lys212, His231, and 247–255 (GLSGTGKTT) each bind ATP. Mn(2+) contacts are provided by Lys212 and His231. Residue Asp268 participates in Mn(2+) binding. Residues Glu296, Arg332, 448–449 (RI), and Thr454 contribute to the ATP site. A substrate-binding site is contributed by Arg332.

The protein belongs to the phosphoenolpyruvate carboxykinase (ATP) family. In terms of assembly, monomer. The cofactor is Mn(2+).

Its subcellular location is the cytoplasm. The catalysed reaction is oxaloacetate + ATP = phosphoenolpyruvate + ADP + CO2. The protein operates within carbohydrate biosynthesis; gluconeogenesis. In terms of biological role, involved in the gluconeogenesis. Catalyzes the conversion of oxaloacetate (OAA) to phosphoenolpyruvate (PEP) through direct phosphoryl transfer between the nucleoside triphosphate and OAA. The chain is Phosphoenolpyruvate carboxykinase (ATP) from Pectobacterium atrosepticum (strain SCRI 1043 / ATCC BAA-672) (Erwinia carotovora subsp. atroseptica).